Consider the following 284-residue polypeptide: MTIVNLAAYHFVSLDANEQWRPLVTARCNELGLRGTILLAPEGINLFIAGTREATDAFIAYIRHDPLFEGKFATLQFKESLSDSQPFRRMLVRLKREIITMKKPAIKPELGRAPFVDARTLKSWLDRGHDDTGRPVVMLDTRNAFEVDVGTFDNALDYRIDKFSEFPEVIDANRADLEGKTVVSFCTGGIRCEKAAIHMKEIGIDNVYQLEGGILKYFEEVGGAHYHGDCFVFDYRTALNPQLQPTENVTCFACRAVVTPEAQRSPSYVAGKSCPACAQAASAA.

A Rhodanese domain is found at 132-226; sequence TGRPVVMLDT…YFEEVGGAHY (95 aa). C186 serves as the catalytic Cysteine persulfide intermediate.

This sequence belongs to the TrhO family.

It carries out the reaction uridine(34) in tRNA + AH2 + O2 = 5-hydroxyuridine(34) in tRNA + A + H2O. Catalyzes oxygen-dependent 5-hydroxyuridine (ho5U) modification at position 34 in tRNAs. This is tRNA uridine(34) hydroxylase from Burkholderia cenocepacia (strain ATCC BAA-245 / DSM 16553 / LMG 16656 / NCTC 13227 / J2315 / CF5610) (Burkholderia cepacia (strain J2315)).